The following is a 252-amino-acid chain: Probable endonuclease 4 (252 aa).

Histidine 56, histidine 96, glutamate 129, aspartate 162, histidine 165, histidine 191, aspartate 204, histidine 206, and glutamate 233 together coordinate Zn(2+).

It belongs to the AP endonuclease 2 family. Requires Zn(2+) as cofactor.

The enzyme catalyses Endonucleolytic cleavage to 5'-phosphooligonucleotide end-products.. In terms of biological role, endonuclease IV plays a role in DNA repair. It cleaves phosphodiester bonds at apurinic or apyrimidinic (AP) sites, generating a 3'-hydroxyl group and a 5'-terminal sugar phosphate. In Mycobacterium tuberculosis (strain ATCC 25177 / H37Ra), this protein is Probable endonuclease 4.